The following is a 353-amino-acid chain: Quinolinate synthase (353 aa).

His-47 and Ser-68 together coordinate iminosuccinate. Residue Cys-113 participates in [4Fe-4S] cluster binding. Iminosuccinate-binding positions include 139 to 141 and Ser-156; that span reads YAN. Cys-200 serves as a coordination point for [4Fe-4S] cluster. Iminosuccinate contacts are provided by residues 226 to 228 and Thr-243; that span reads HPE. Cys-297 contacts [4Fe-4S] cluster.

Belongs to the quinolinate synthase family. Type 1 subfamily. It depends on [4Fe-4S] cluster as a cofactor.

The protein resides in the cytoplasm. The enzyme catalyses iminosuccinate + dihydroxyacetone phosphate = quinolinate + phosphate + 2 H2O + H(+). The protein operates within cofactor biosynthesis; NAD(+) biosynthesis; quinolinate from iminoaspartate: step 1/1. Catalyzes the condensation of iminoaspartate with dihydroxyacetone phosphate to form quinolinate. This Yersinia pestis bv. Antiqua (strain Nepal516) protein is Quinolinate synthase.